Consider the following 1952-residue polypeptide: Protein ROS1A (1952 aa).

Disordered regions lie at residues 72–157, 693–778, 1302–1334, and 1367–1398; these read EVVG…CRSE, IIRP…ESTS, HGTS…DDNV, and LIEN…AGKK. Composition is skewed to basic residues over residues 90 to 102 and 130 to 139; these read PARK…HRPK and GKRKYVRKKT. Composition is skewed to basic and acidic residues over residues 709 to 720 and 727 to 747; these read PRTDNHQVKVSE and LPEK…EKPK. The span at 769-778 shows a compositional bias: polar residues; sequence TNPLQNESTS. The span at 1388–1398 shows a compositional bias: basic residues; sequence AKRPRVGAGKK. 4 residues coordinate [4Fe-4S] cluster: C1582, C1589, C1592, and C1598.

The protein belongs to the DNA glycosylase family. DEMETER subfamily. [4Fe-4S] cluster serves as cofactor. In terms of tissue distribution, expressed in roots, leaf blades, leaf sheaths, apical and lateral shoot meristems, inflorescence meristems, lodicules, pollen grains, ovules and seeds. Expressed in vascular tissues of roots and leaves, pollen grains, pericarp, aleurone, and starchy endosperm.

It localises to the nucleus. Functionally, bifunctional DNA glycosylase/lyase, which excises 5-methylcytosine (5-meC) and 5-hydroxymethylcytosine (5-hmeC), leaving an apyrimidinic (AP) site that is subsequently incised by the lyase activity. DNA demethylase that is indispensable in both male and female gametophyte development. Involved in the regulation of DNA methylation in the promoters of RISBZ1/BZIP58 and DOF3/RPBF, two transcription factors that functions synergistically to positively regulate genes that are key players in the development of aleurone layers. Active DNA demethylation carried out by ROS1A in rice endosperms may restrict the number of aleurone cell layers. The polypeptide is Protein ROS1A (Oryza sativa subsp. japonica (Rice)).